Consider the following 128-residue polypeptide: NADH-quinone oxidoreductase subunit A (128 aa).

Helical transmembrane passes span 9–29, 68–88, and 96–116; these read FPIAVALLVAVGLAAVMLALA, LLFIVFDIEAIFLYPWAVLLL, and LGWAGYISMGIFVATLVAGLV.

This sequence belongs to the complex I subunit 3 family. As to quaternary structure, NDH-1 is composed of 14 different subunits. Subunits NuoA, H, J, K, L, M, N constitute the membrane sector of the complex.

It localises to the cell inner membrane. The catalysed reaction is a quinone + NADH + 5 H(+)(in) = a quinol + NAD(+) + 4 H(+)(out). Its function is as follows. NDH-1 shuttles electrons from NADH, via FMN and iron-sulfur (Fe-S) centers, to quinones in the respiratory chain. The immediate electron acceptor for the enzyme in this species is believed to be ubiquinone. Couples the redox reaction to proton translocation (for every two electrons transferred, four hydrogen ions are translocated across the cytoplasmic membrane), and thus conserves the redox energy in a proton gradient. The protein is NADH-quinone oxidoreductase subunit A of Anaeromyxobacter sp. (strain Fw109-5).